We begin with the raw amino-acid sequence, 601 residues long: Elongation factor 4 (601 aa).

In terms of domain architecture, tr-type G spans Asn-6–His-188. GTP-binding positions include Asp-18 to Thr-23 and Asn-135 to Asp-138.

This sequence belongs to the TRAFAC class translation factor GTPase superfamily. Classic translation factor GTPase family. LepA subfamily.

The protein localises to the cell inner membrane. It carries out the reaction GTP + H2O = GDP + phosphate + H(+). Functionally, required for accurate and efficient protein synthesis under certain stress conditions. May act as a fidelity factor of the translation reaction, by catalyzing a one-codon backward translocation of tRNAs on improperly translocated ribosomes. Back-translocation proceeds from a post-translocation (POST) complex to a pre-translocation (PRE) complex, thus giving elongation factor G a second chance to translocate the tRNAs correctly. Binds to ribosomes in a GTP-dependent manner. In Bartonella quintana (strain Toulouse) (Rochalimaea quintana), this protein is Elongation factor 4.